Consider the following 389-residue polypeptide: E3 ubiquitin-protein ligase E3D (389 aa).

Alanine 2 is subject to N-acetylalanine. The short motif at 129–159 is the BRAT1-like motif element; the sequence is PLPSENWGALVGEWCCHPDPFANKPLHPQEN. Cysteine 144 contacts Zn(2+). Positions 235–257 are interaction with UBE2C; that stretch reads QSSERSFPIIPRPRFVQSVIAQC. Residues 353-389 form an HECT-like region; it reads LPSATCLELLLILSKSNANLPSSLRHMNSFQVAFLKI.

In terms of assembly, interacts with UBE2C/UbcH10 (E2 ubiquitin-conjugating enzyme). In vitro, interacts with cyclin-B. Post-translationally, ubiquitinated by UBCH10 (E2 ubiquitin-conjugating enzyme).

It localises to the cytoplasm. The catalysed reaction is S-ubiquitinyl-[E2 ubiquitin-conjugating enzyme]-L-cysteine + [acceptor protein]-L-lysine = [E2 ubiquitin-conjugating enzyme]-L-cysteine + N(6)-ubiquitinyl-[acceptor protein]-L-lysine.. It functions in the pathway protein modification; protein ubiquitination. In terms of biological role, E3 ubiquitin-protein ligase which accepts ubiquitin from specific E2 ubiquitin-conjugating enzymes, and transfers it to substrates, generally promoting their degradation by the proteasome. Independently of its E3 ubiquitin-protein ligase activity, acts as an inhibitor of CPSF3 endonuclease activity by blocking CPSF3 active site. This Pongo abelii (Sumatran orangutan) protein is E3 ubiquitin-protein ligase E3D (UBE3D).